We begin with the raw amino-acid sequence, 591 residues long: L-fucose isomerase (591 aa).

Residues glutamate 337 and aspartate 361 each act as proton acceptor in the active site. Mn(2+)-binding residues include glutamate 337, aspartate 361, and histidine 528.

The protein belongs to the L-fucose isomerase family. In terms of assembly, homohexamer. The cofactor is Mn(2+).

Its subcellular location is the cytoplasm. The catalysed reaction is L-fucose = L-fuculose. The protein operates within carbohydrate degradation; L-fucose degradation; L-lactaldehyde and glycerone phosphate from L-fucose: step 1/3. Its function is as follows. Converts the aldose L-fucose into the corresponding ketose L-fuculose. This Escherichia coli O6:K15:H31 (strain 536 / UPEC) protein is L-fucose isomerase.